Consider the following 204-residue polypeptide: Ribosomal RNA small subunit methyltransferase G (204 aa).

S-adenosyl-L-methionine is bound by residues Gly-74, Leu-79, 125–126, and Arg-138; that span reads AY.

The protein belongs to the methyltransferase superfamily. RNA methyltransferase RsmG family.

It localises to the cytoplasm. Its function is as follows. Specifically methylates the N7 position of a guanine in 16S rRNA. In Brachyspira hyodysenteriae (strain ATCC 49526 / WA1), this protein is Ribosomal RNA small subunit methyltransferase G.